Consider the following 548-residue polypeptide: Glucose-6-phosphate isomerase (548 aa).

The active-site Proton donor is the glutamate 355. Catalysis depends on residues histidine 386 and lysine 514.

It belongs to the GPI family.

Its subcellular location is the cytoplasm. It carries out the reaction alpha-D-glucose 6-phosphate = beta-D-fructose 6-phosphate. It participates in carbohydrate biosynthesis; gluconeogenesis. It functions in the pathway carbohydrate degradation; glycolysis; D-glyceraldehyde 3-phosphate and glycerone phosphate from D-glucose: step 2/4. Functionally, catalyzes the reversible isomerization of glucose-6-phosphate to fructose-6-phosphate. The polypeptide is Glucose-6-phosphate isomerase (Photorhabdus laumondii subsp. laumondii (strain DSM 15139 / CIP 105565 / TT01) (Photorhabdus luminescens subsp. laumondii)).